A 277-amino-acid polypeptide reads, in one-letter code: Myelin proteolipid protein (277 aa).

At 1–10 the chain is on the cytoplasmic side; sequence MGLLECCARC. 3 S-palmitoyl cysteine lipidation sites follow: Cys6, Cys7, and Cys10. Residues 11–36 form a helical membrane-spanning segment; the sequence is LVGAPFASLVATGLCFFGVALFCGCG. The Extracellular portion of the chain corresponds to 37 to 59; the sequence is HEALTGTEKLIETYFSKNYQDYE. A helical transmembrane segment spans residues 60 to 88; that stretch reads YLINVIHAFQYVIYGTASFFFLYGALLLA. Residues 89–151 are Cytoplasmic-facing; sequence EGFYTTGAVR…LGKWLGHPDK (63 aa). Residue Cys109 is the site of S-palmitoyl cysteine attachment. Ser114 is subject to Phosphoserine. Phosphothreonine is present on residues Thr116 and Thr118. Residue Cys141 is the site of S-palmitoyl cysteine attachment. A helical membrane pass occupies residues 152 to 178; that stretch reads FVGITYALTVVWLLVFACSAVPVYIYF. The Extracellular segment spans residues 179 to 238; sequence NTWTTCQSIAFPSKTSASIGSLCADARMYGVLPWNAFPGKVCGSNLLSICKTAEFQMTFH. 2 cysteine pairs are disulfide-bonded: Cys184–Cys228 and Cys201–Cys220. A lipid anchor (O-palmitoyl serine) is attached at Ser199. A helical transmembrane segment spans residues 239 to 268; it reads LFIAAFVGAAATLISLLTFMIAATYNFAVL. Residues 269–277 are Cytoplasmic-facing; it reads KLMGRGTKF.

The protein belongs to the myelin proteolipid protein family.

Its subcellular location is the cell membrane. The protein resides in the myelin membrane. In terms of biological role, this is the major myelin protein from the central nervous system. It plays an important role in the formation or maintenance of the multilamellar structure of myelin. The chain is Myelin proteolipid protein (PLP1) from Macaca fascicularis (Crab-eating macaque).